The chain runs to 365 residues: Succinyl-diaminopimelate desuccinylase (365 aa).

His-65 serves as a coordination point for Zn(2+). The active site involves Asp-67. Asp-96 serves as a coordination point for Zn(2+). The active-site Proton acceptor is the Glu-126. Residues Glu-127, Glu-155, and His-340 each contribute to the Zn(2+) site.

Belongs to the peptidase M20A family. DapE subfamily. As to quaternary structure, homodimer. Requires Zn(2+) as cofactor. It depends on Co(2+) as a cofactor.

It catalyses the reaction N-succinyl-(2S,6S)-2,6-diaminopimelate + H2O = (2S,6S)-2,6-diaminopimelate + succinate. Its pathway is amino-acid biosynthesis; L-lysine biosynthesis via DAP pathway; LL-2,6-diaminopimelate from (S)-tetrahydrodipicolinate (succinylase route): step 3/3. Catalyzes the hydrolysis of N-succinyl-L,L-diaminopimelic acid (SDAP), forming succinate and LL-2,6-diaminopimelate (DAP), an intermediate involved in the bacterial biosynthesis of lysine and meso-diaminopimelic acid, an essential component of bacterial cell walls. This chain is Succinyl-diaminopimelate desuccinylase, found in Campylobacter jejuni subsp. jejuni serotype O:6 (strain 81116 / NCTC 11828).